An 81-amino-acid chain; its full sequence is Putative defensin-like protein 102 (81 aa).

Residues 1 to 24 (MTTTMKTFVAFVLTVFFIMSSAHC) form the signal peptide. Cystine bridges form between Cys43-Cys78, Cys49-Cys71, Cys57-Cys76, and Cys61-Cys77.

Belongs to the DEFL family.

It localises to the secreted. This is Putative defensin-like protein 102 from Arabidopsis thaliana (Mouse-ear cress).